The following is a 210-amino-acid chain: ATP-dependent Clp protease proteolytic subunit (210 aa).

Ser-106 acts as the Nucleophile in catalysis. His-131 is an active-site residue.

The protein belongs to the peptidase S14 family. As to quaternary structure, fourteen ClpP subunits assemble into 2 heptameric rings which stack back to back to give a disk-like structure with a central cavity, resembling the structure of eukaryotic proteasomes.

Its subcellular location is the cytoplasm. It catalyses the reaction Hydrolysis of proteins to small peptides in the presence of ATP and magnesium. alpha-casein is the usual test substrate. In the absence of ATP, only oligopeptides shorter than five residues are hydrolyzed (such as succinyl-Leu-Tyr-|-NHMec, and Leu-Tyr-Leu-|-Tyr-Trp, in which cleavage of the -Tyr-|-Leu- and -Tyr-|-Trp bonds also occurs).. Cleaves peptides in various proteins in a process that requires ATP hydrolysis. Has a chymotrypsin-like activity. Plays a major role in the degradation of misfolded proteins. This is ATP-dependent Clp protease proteolytic subunit from Rhodopseudomonas palustris (strain BisB18).